The sequence spans 359 residues: Endoglucanase 1 (359 aa).

2 disordered regions span residues 1–26 and 47–72; these read MENP…RGGR and TGAS…DAGT. Basic residues predominate over residues 13 to 24; sequence LRRRRSERRARG. Over residues 60–72 the composition is skewed to low complexity; it reads APSADSGTADAGT. Aspartate 154 is a catalytic residue. The cysteines at positions 155 and 199 are disulfide-linked. Aspartate 192 (proton donor) is an active-site residue. Aspartate 339 (nucleophile) is an active-site residue.

The protein belongs to the glycosyl hydrolase 6 (cellulase B) family.

The enzyme catalyses Endohydrolysis of (1-&gt;4)-beta-D-glucosidic linkages in cellulose, lichenin and cereal beta-D-glucans.. Functionally, CMCase I preferentially hydrolyzes carboxymethyl cellulose (CMC). This chain is Endoglucanase 1 (casA), found in Streptomyces sp. (strain KSM-9).